The following is a 253-amino-acid chain: Phosphate import ATP-binding protein PstB (253 aa).

Residues 5 to 248 (IQVRDLNAYY…PSDKRTEDYI (244 aa)) enclose the ABC transporter domain. Position 37–44 (37–44 (GPSGCGKS)) interacts with ATP.

This sequence belongs to the ABC transporter superfamily. Phosphate importer (TC 3.A.1.7) family. As to quaternary structure, the complex is composed of two ATP-binding proteins (PstB), two transmembrane proteins (PstC and PstA) and a solute-binding protein (PstS).

It localises to the cell inner membrane. It carries out the reaction phosphate(out) + ATP + H2O = ADP + 2 phosphate(in) + H(+). In terms of biological role, part of the ABC transporter complex PstSACB involved in phosphate import. Responsible for energy coupling to the transport system. This Koribacter versatilis (strain Ellin345) protein is Phosphate import ATP-binding protein PstB.